The following is an 84-amino-acid chain: Large ribosomal subunit protein bL27 (84 aa).

Residues 1-21 (MAHKKGGGSTKNGRDSNPKYL) are disordered.

The protein belongs to the bacterial ribosomal protein bL27 family.

This is Large ribosomal subunit protein bL27 from Chlorobaculum parvum (strain DSM 263 / NCIMB 8327) (Chlorobium vibrioforme subsp. thiosulfatophilum).